The sequence spans 337 residues: Monoacylglycerol lipase abhd6-B (337 aa).

Over 1-19 (MDIDVLNMFLVAGGTLLVP) the chain is Extracellular. The helical; Signal-anchor for type II membrane protein transmembrane segment at 20-42 (LLAFMTSFLLWPAALIRIYYWYW) threads the bilayer. The Cytoplasmic segment spans residues 43 to 337 (RRALGMQVKY…QSTDNHKKHD (295 aa)). The AB hydrolase-1 domain maps to 72–313 (PSVLMLHGFS…CGHSVVMERP (242 aa)). Ser148 (nucleophile) is an active-site residue. Catalysis depends on charge relay system residues Asp278 and His306.

Belongs to the AB hydrolase superfamily.

The protein localises to the late endosome membrane. The protein resides in the lysosome membrane. It localises to the mitochondrion membrane. The catalysed reaction is Hydrolyzes glycerol monoesters of long-chain fatty acids.. It carries out the reaction 1-octanoylglycerol + H2O = octanoate + glycerol + H(+). The enzyme catalyses 1-decanoylglycerol + H2O = decanoate + glycerol + H(+). It catalyses the reaction 1-dodecanoylglycerol + H2O = dodecanoate + glycerol + H(+). The catalysed reaction is 1-tetradecanoylglycerol + H2O = tetradecanoate + glycerol + H(+). It carries out the reaction 2-hexadecanoylglycerol + H2O = glycerol + hexadecanoate + H(+). The enzyme catalyses 2-(9Z-octadecenoyl)-glycerol + H2O = glycerol + (9Z)-octadecenoate + H(+). It catalyses the reaction 1-(9Z-octadecenoyl)-glycerol + H2O = glycerol + (9Z)-octadecenoate + H(+). The catalysed reaction is 2-(9Z,12Z-octadecadienoyl)-glycerol + H2O = (9Z,12Z)-octadecadienoate + glycerol + H(+). It carries out the reaction 2-(5Z,8Z,11Z,14Z-eicosatetraenoyl)-glycerol + H2O = glycerol + (5Z,8Z,11Z,14Z)-eicosatetraenoate + H(+). The enzyme catalyses 1-(5Z,8Z,11Z,14Z-eicosatetraenoyl)-glycerol + H2O = glycerol + (5Z,8Z,11Z,14Z)-eicosatetraenoate + H(+). It catalyses the reaction 1-(9Z,12Z-octadecadienoyl)-glycerol + H2O = (9Z,12Z)-octadecadienoate + glycerol + H(+). The catalysed reaction is 3-(9Z-octadecenoyl)-sn-glycero-1-phospho-(3'-(9Z-octadecenoyl)-1'-sn-glycerol) + H2O = 3-(9Z-octadecenoyl)-sn-glycero-1-phospho-(1'-sn-glycerol) + (9Z)-octadecenoate + H(+). It carries out the reaction (S,S)-2-(9Z-octadecenoyl)-sn-glycero-1-phospho-(2'-(9Z-octadecenoyl)-1'-sn-glycerol) + H2O = (S,S)-2-(9Z-octadecenoyl)-sn-glycero-1-phospho-(1'-sn-glycerol) + (9Z)-octadecenoate + H(+). The enzyme catalyses (R,R)-2-(9Z-octadecenoyl)-sn-glycero-3-phospho-(2'-(9Z-octadecenoyl)-3'-sn-glycerol) + H2O = (R,R)-2-(9Z-octadecenoyl)-sn-glycero-3-phospho-(3'-sn-glycerol) + (9Z)-octadecenoate + H(+). Functionally, lipase that preferentially hydrolysis medium-chain saturated monoacylglycerols including 2-arachidonoylglycerol. Through 2-arachidonoylglycerol degradation may regulate endocannabinoid signaling pathways. Also has a lysophosphatidyl lipase activity with a preference for lysophosphatidylglycerol among other lysophospholipids. Also able to degrade bis(monoacylglycero)phosphate (BMP) and constitutes the major enzyme for BMP catabolism. BMP, also known as lysobisphosphatidic acid, is enriched in late endosomes and lysosomes and plays a key role in the formation of intraluminal vesicles and in lipid sorting. The chain is Monoacylglycerol lipase abhd6-B (abhd6-b) from Xenopus laevis (African clawed frog).